Reading from the N-terminus, the 109-residue chain is uncharacterized protein (109 aa).

3 helical membrane-spanning segments follow: residues 16-36, 52-72, and 87-107; these read HPHL…EIYF, LIVL…LIAL, and ILLC…AYPV.

The protein localises to the cell membrane. This is an uncharacterized protein from Salmonella typhimurium (strain LT2 / SGSC1412 / ATCC 700720).